Consider the following 379-residue polypeptide: Dual-specificity RNA methyltransferase RlmN (379 aa).

Glu-95 acts as the Proton acceptor in catalysis. A Radical SAM core domain is found at 101–345 (EETRGTLCVS…TTVRKTRGDD (245 aa)). An intrachain disulfide couples Cys-108 to Cys-350. [4Fe-4S] cluster-binding residues include Cys-115, Cys-119, and Cys-122. Residues 176–177 (GE), Ser-208, 230–232 (SLH), and Asn-307 each bind S-adenosyl-L-methionine. Cys-350 serves as the catalytic S-methylcysteine intermediate.

Belongs to the radical SAM superfamily. RlmN family. [4Fe-4S] cluster serves as cofactor.

The protein localises to the cytoplasm. The catalysed reaction is adenosine(2503) in 23S rRNA + 2 reduced [2Fe-2S]-[ferredoxin] + 2 S-adenosyl-L-methionine = 2-methyladenosine(2503) in 23S rRNA + 5'-deoxyadenosine + L-methionine + 2 oxidized [2Fe-2S]-[ferredoxin] + S-adenosyl-L-homocysteine. It catalyses the reaction adenosine(37) in tRNA + 2 reduced [2Fe-2S]-[ferredoxin] + 2 S-adenosyl-L-methionine = 2-methyladenosine(37) in tRNA + 5'-deoxyadenosine + L-methionine + 2 oxidized [2Fe-2S]-[ferredoxin] + S-adenosyl-L-homocysteine. Functionally, specifically methylates position 2 of adenine 2503 in 23S rRNA and position 2 of adenine 37 in tRNAs. m2A2503 modification seems to play a crucial role in the proofreading step occurring at the peptidyl transferase center and thus would serve to optimize ribosomal fidelity. The sequence is that of Dual-specificity RNA methyltransferase RlmN from Burkholderia cenocepacia (strain ATCC BAA-245 / DSM 16553 / LMG 16656 / NCTC 13227 / J2315 / CF5610) (Burkholderia cepacia (strain J2315)).